The primary structure comprises 172 residues: C-phycocyanin beta chain (172 aa).

Asn72 carries the N4-methylasparagine modification. (2R,3E)-phycocyanobilin-binding residues include Cys82 and Cys153.

Belongs to the phycobiliprotein family. Heterodimer of an alpha and a beta subunit, which further assembles into trimers and the trimers into hexamers. The basic functional unit of phycobiliproteins is a ring-shaped hexamer formed from two back-to-back trimers contacting via the alpha chain subunits. The trimers are composed of alpha/beta subunit heterodimers arranged around a three-fold axis of symmetry. The phycoerythrins also contain a gamma subunit which is located in the center of the hexamer. Contains two covalently linked bilin chromophores.

The protein resides in the plastid. It localises to the chloroplast thylakoid membrane. Functionally, light-harvesting photosynthetic bile pigment-protein from the phycobiliprotein complex (phycobilisome, PBS). Phycocyanin is the major phycobiliprotein in the PBS rod. This chain is C-phycocyanin beta chain (cpcB), found in Pyropia haitanensis (Red seaweed).